The primary structure comprises 456 residues: Hydroxymethylglutaryl coenzyme A synthase (456 aa).

Residue Ala34 participates in (3S)-3-hydroxy-3-methylglutaryl-CoA binding. The Proton donor/acceptor role is filled by Glu85. Residues Cys119, Thr161, Ser211, His258, Lys267, Asn335, and Ser369 each coordinate (3S)-3-hydroxy-3-methylglutaryl-CoA. The active-site Acyl-thioester intermediate is Cys119. The active-site Proton donor/acceptor is His258.

The protein belongs to the thiolase-like superfamily. HMG-CoA synthase family.

It carries out the reaction acetoacetyl-CoA + acetyl-CoA + H2O = (3S)-3-hydroxy-3-methylglutaryl-CoA + CoA + H(+). HMG-CoA synthase; part of the gene cluster that mediates the biosynthesis of 1233A, a natural compound known as an inhibitor of HMG-CoA synthase in the mevalonate pathway and with antibacterial and antifungal activities. This enzyme condenses acetyl-CoA with acetoacetyl-CoA to form HMG-CoA, which is the substrate for HMG-CoA reductase. As part of the 1233A biosynthesis cluster, is involved in conferring self-resistance to 1233A. This is Hydroxymethylglutaryl coenzyme A synthase from Fusarium sp.